A 63-amino-acid polypeptide reads, in one-letter code: 2-hydroxymuconate tautomerase (63 aa).

Pro-2 (proton acceptor; via imino nitrogen) is an active-site residue.

This sequence belongs to the 4-oxalocrotonate tautomerase family. In terms of assembly, homohexamer.

The catalysed reaction is (2Z,4E)-2-hydroxyhexa-2,4-dienedioate = (3E)-2-oxohex-3-enedioate. Its pathway is aromatic compound metabolism; salicylate degradation. Catalyzes the ketonization of 2-hydroxymuconate stereoselectively to yield 2-oxo-3-hexenedioate. In Comamonas testosteroni (Pseudomonas testosteroni), this protein is 2-hydroxymuconate tautomerase (aphI).